A 568-amino-acid polypeptide reads, in one-letter code: TNF receptor-associated factor 3 (568 aa).

The disordered stretch occupies residues 1 to 28 (MESSKKMDSPGALQTNPPLKLHTDRSAG). Ser-9 bears the Phosphoserine mark. A Glycyl cysteine thioester (Cys-Gly) (interchain with G-Cter in ubiquitin) cross-link involves residue Cys-56. Residues 68 to 77 (CGHRFCESCM) form an RING-type zinc finger. Cys-124 participates in a covalent cross-link: Glycyl cysteine thioester (Cys-Gly) (interchain with G-Cter in ubiquitin). TRAF-type zinc fingers lie at residues 135-190 (VHLK…IALQ) and 191-249 (KHED…QQIK). Residue Lys-168 forms a Glycyl lysine isopeptide (Lys-Gly) (interchain with G-Cter in ubiquitin) linkage. Residues 267-338 (SNSLEKKVSL…KLKELDKEIR (72 aa)) adopt a coiled-coil conformation. A Glycyl lysine isopeptide (Lys-Gly) (interchain with G-Cter in ubiquitin) cross-link involves residue Lys-329. The tract at residues 392–415 (LSVHDIRLADMDLRFQVLETASYN) is (Microbial infection) Interaction with glycoprotein N of Andes and New York hantaviruses. One can recognise an MATH domain in the interval 415–560 (NGVLIWKIRD…DDTIFIKVIV (146 aa)).

Belongs to the TNF receptor-associated factor family. A subfamily. In terms of assembly, homotrimer. Heterotrimer with TRAF2 and TRAF5. Interacts with LTBR/TNFRSF3, TNFRSF4, TNFRSF5/CD40, TNFRSF8/CD30, TNFRSF13C TNFRSF17/BCMA, TLR4 and EDAR. Interacts with MAP3K5, MAP3K14, TRAIP/TRIP, TDP2/TTRAP, TANK/ITRAF and TRAF3IP1. Interaction with TNFRSF5/CD40 is modulated by TANK/ITRAF, which competes for the same binding site. Interacts with TICAM1. Interacts with TRAFD1. Interacts with OTUB1, OTUB2 and OTUD5. Interacts with RNF216, OPTN and TBK1. Identified in a complex with TRAF2, MAP3K14 and BIRC3. Interacts with BIRC2 and BIRC3. Upon exposure to bacterial lipopolysaccharide (LPS), recruited to a transient complex containing TLR4, TRAF3, TRAF6, IKBKG, MAP3K7, MYD88, TICAM1, BIRC2, BIRC3 and UBE2N. Interacts (via RING-type zinc finger domain) with SRC. Interacts with CARD14. Interacts (via MATH domain) with PTPN22; the interaction promotes TRAF3 polyubiquitination. Interacts with MAVS. Directly interacts with DDX3X; this interaction stimulates TRAF3 'Lys-63' ubiquitination. Interacts with IRF3. Interacts with IKBKE in the course of Sendai virus infection. Interacts with TRIM35. Interacts with GAPDH; promoting TRAF3 ubiquitination. Interacts with PPP3CA and PPP3CB. Interacts with ATP1B1; promoting TRAF3 ubiquitination. Interacts with RALGDS. Interacts with FBXO11. (Microbial infection) Interacts (via N-terminus) with New York hantavirus glycoprotein N (via C-terminus); this interaction inhibits the formation of TRAF3-TBK1 complexes. As to quaternary structure, (Microbial infection) Interacts with Andes hantavirus glycoprotein N (via C-terminus); this interaction inhibits the formation of TRAF3-TBK1 complexes. In terms of assembly, (Microbial infection) Interacts with Tula hantavirus glycoprotein N (via C-terminus); this interaction inhibits the formation of TRAF3-TBK1 complexes. (Microbial infection) Interacts with Epstein-Barr virus protein LMP1. Undergoes 'Lys-48'-linked polyubiquitination, leading to its proteasomal degradation in response to signaling by TNFSF13B, TLR4 or through CD40. 'Lys-48'-linked polyubiquitinated form is deubiquitinated by OTUD7B, preventing TRAF3 proteolysis and over-activation of non-canonical NF-kappa-B. Undergoes 'Lys-63'-linked ubiquitination during early stages of virus infection, and 'Lys-48'-linked ubiquitination during later stages. Undergoes both 'Lys-48'-linked and 'Lys-63'-linked ubiquitination in response to TLR3 and TLR4 signaling. 'Lys-63'-linked ubiquitination can be mediated by TRIM35. Deubiquitinated by OTUB1, OTUB2 and OTUD5. Undergoes 'Lys-63'-linked deubiquitination by MYSM1 to terminate the pattern-recognition receptors/PRRs pathways. Also undergoes 'Lys-29'-linked ubiquitination on Cys-56 and Cys-124 by NEDD4L; leading to increased 'Lys-48'- and 'Lys-63'-linked ubiquitination as well as increased binding to TBK1. TLR4 signals emanating from bacteria containing vesicles trigger 'Lys-33'-linked polyubiquitination that promotes the assembly of the exocyst complex thereby connecting innate immune signaling to the cellular trafficking apparatus. Deubiquitinated by USP25 during viral infection, leading to TRAF3 stabilization and type I interferon production. Ubiquitinated at Lys-329 by the SCF(FBXL2) complex, leading to its degradation by the proteasome. 'Lys-63'-linked ubiquitination by FBXO11 in a NEDD8-dependent manner promotes the amplification of IFN-I signaling. In terms of processing, (Microbial infection) Cleaved by enterovirus D68 protease 2A; leading to inhibition of NF-kappa-B or IFN-beta triggered by TRAF3.

It localises to the cytoplasm. The protein localises to the endosome. Its subcellular location is the mitochondrion. The catalysed reaction is S-ubiquitinyl-[E2 ubiquitin-conjugating enzyme]-L-cysteine + [acceptor protein]-L-lysine = [E2 ubiquitin-conjugating enzyme]-L-cysteine + N(6)-ubiquitinyl-[acceptor protein]-L-lysine.. Cytoplasmic E3 ubiquitin ligase that regulates various signaling pathways, such as the NF-kappa-B, mitogen-activated protein kinase (MAPK) and interferon regulatory factor (IRF) pathways, and thus controls a lot of biological processes in both immune and non-immune cell types. In TLR and RLR signaling pathways, acts as an E3 ubiquitin ligase promoting the synthesis of 'Lys-63'-linked polyubiquitin chains on several substrates such as ASC that lead to the activation of the type I interferon response or the inflammasome. Following the activation of certain TLRs such as TLR4, acts as a negative NF-kappa-B regulator, possibly to avoid unregulated inflammatory response, and its degradation via 'Lys-48'-linked polyubiquitination is required for MAPK activation and production of inflammatory cytokines. Alternatively, when TLR4 orchestrates bacterial expulsion, TRAF3 undergoes 'Lys-33'-linked polyubiquitination and subsequently binds to RALGDS, mobilizing the exocyst complex to rapidly expel intracellular bacteria back for clearance. Also acts as a constitutive negative regulator of the alternative NF-kappa-B pathway, which controls B-cell survival and lymphoid organ development. Required for normal antibody isotype switching from IgM to IgG. Plays a role T-cell dependent immune responses. Down-regulates proteolytic processing of NFKB2, and thereby inhibits non-canonical activation of NF-kappa-B. Promotes ubiquitination and proteasomal degradation of MAP3K14. This Homo sapiens (Human) protein is TNF receptor-associated factor 3.